We begin with the raw amino-acid sequence, 471 residues long: Mitochondrial distribution and morphology protein 10 (471 aa).

Disordered regions lie at residues 272 to 291, 374 to 394, and 436 to 455; these read TEMP…SNHG, ADTP…DEEN, and SWAA…GGVS. The span at 276–288 shows a compositional bias: low complexity; the sequence is SSSSSTSSTTTTS. Over residues 444–455 the composition is skewed to gly residues; that stretch reads AGGGQSVGGGVS.

The protein belongs to the MDM10 family. As to quaternary structure, component of the ER-mitochondria encounter structure (ERMES) or MDM complex, composed of mmm1, mdm10, mdm12 and mdm34. Associates with the mitochondrial outer membrane sorting assembly machinery SAM(core) complex.

The protein localises to the mitochondrion outer membrane. Component of the ERMES/MDM complex, which serves as a molecular tether to connect the endoplasmic reticulum and mitochondria. Components of this complex are involved in the control of mitochondrial shape and protein biogenesis and may function in phospholipid exchange. mdm10 is involved in the late assembly steps of the general translocase of the mitochondrial outer membrane (TOM complex). Functions in the tom40-specific route of the assembly of outer membrane beta-barrel proteins, including the association of tom40 with the receptor tom22 and small TOM proteins. Can associate with the SAM(core) complex as well as the mdm12-mmm1 complex, both involved in late steps of the major beta-barrel assembly pathway, that is responsible for biogenesis of all outer membrane beta-barrel proteins. May act as a switch that shuttles between both complexes and channels precursor proteins into the tom40-specific pathway. Plays a role in mitochondrial morphology and in the inheritance of mitochondria. This is Mitochondrial distribution and morphology protein 10 (mdmB) from Neosartorya fischeri (strain ATCC 1020 / DSM 3700 / CBS 544.65 / FGSC A1164 / JCM 1740 / NRRL 181 / WB 181) (Aspergillus fischerianus).